The primary structure comprises 887 residues: Cytoplasmic aconitate hydratase (887 aa).

Residues Q84 and 204 to 206 (DSH) each bind substrate. [4Fe-4S] cluster is bound by residues C436, C502, and C505. Substrate contacts are provided by residues R535, R540, R697, and 777–778 (SR).

The protein belongs to the aconitase/IPM isomerase family. In terms of assembly, interacts with gex-3. It depends on [4Fe-4S] cluster as a cofactor.

It localises to the cytoplasm. The protein localises to the cytosol. The enzyme catalyses citrate = D-threo-isocitrate. Functionally, catalyzes the isomerization of citrate to isocitrate via cis-aconitate. Has probably no RNA-binding activity. In Caenorhabditis elegans, this protein is Cytoplasmic aconitate hydratase (aco-1).